We begin with the raw amino-acid sequence, 334 residues long: MKDLRFGRLKCYSLHLGILPLTVLVLVFFCFVCLSLRSQEWGHPGAVNRKAYPQPRVLTPTRTDVLVLTPWLAPIIWEGTFDIDTLNEQFRLRNTTIGLTVFAVKKYVVFLKLFLETAEQHFMVGHKVIYYVFTDRPADVPQVPLGAGRRLVVLTVRNYTRWQDVSMHRMEVISHFSEQRFRHEVDYLVCADVDMKFRDHVGVEILSALFGTLHPGFYRSRRESFTYERRPQSQAYIPWDQGDFYYMGAFFGGSVVEVHHLTKACHQAMVEDQANGIEAVWHDESHLNKYLLYHKPTKVLSPEYMWDQQLLGWPSIMKKLRYVAVPKNHQAIRN.

At 1–15 (MKDLRFGRLKCYSLH) the chain is on the cytoplasmic side. The chain crosses the membrane as a helical; Signal-anchor for type II membrane protein span at residues 16–36 (LGILPLTVLVLVFFCFVCLSL). Over 37 to 334 (RSQEWGHPGA…VPKNHQAIRN (298 aa)) the chain is Lumenal. N-linked (GlcNAc...) asparagine glycosylation is present at Asn94. Residues 102–104 (FAV), Tyr107, and 192–194 (DVD) contribute to the UDP-N-acetyl-alpha-D-galactosamine site. Positions 192 and 194 each coordinate Mn(2+). An alpha-L-fucosyl-(1-&gt;2)-beta-D-galactosyl derivative is bound by residues His214, Thr226, Glu284, and Asp307. Glu284 serves as the catalytic Nucleophile.

The protein belongs to the glycosyltransferase 6 family. Mn(2+) is required as a cofactor. In terms of tissue distribution, large intestine, caecum, stomach, pancreas, submaxillary gland and kidney (at protein level). Ubiquitous.

Its subcellular location is the golgi apparatus. It is found in the golgi stack membrane. It localises to the secreted. The enzyme catalyses an alpha-L-fucosyl-(1-&gt;2)-beta-D-galactosyl derivative + UDP-N-acetyl-alpha-D-galactosamine = an N-acetyl-alpha-D-galactosaminyl-(1-&gt;3)-[alpha-L-fucosyl-(1-&gt;2)]-beta-D-galactosyl derivative + UDP + H(+). It catalyses the reaction an alpha-L-fucosyl-(1-&gt;2)-beta-D-galactosyl derivative + UDP-alpha-D-galactose = an alpha-D-galactosyl-(1-&gt;3)-[alpha-L-fucosyl-(1-&gt;2)]-beta-D-galactosyl derivative + UDP + H(+). It participates in protein modification; protein glycosylation. Its function is as follows. Possesses strong B transferase activity and weak A transferase activity. The chain is Histo-blood group ABO system transferase 2 (Abo2) from Rattus norvegicus (Rat).